The chain runs to 377 residues: Alanine racemase (377 aa).

The Proton acceptor; specific for D-alanine role is filled by K35. K35 is subject to N6-(pyridoxal phosphate)lysine. R130 serves as a coordination point for substrate. Y260 acts as the Proton acceptor; specific for L-alanine in catalysis. M312 contacts substrate.

This sequence belongs to the alanine racemase family. Pyridoxal 5'-phosphate serves as cofactor.

It carries out the reaction L-alanine = D-alanine. The protein operates within amino-acid biosynthesis; D-alanine biosynthesis; D-alanine from L-alanine: step 1/1. Its function is as follows. Catalyzes the interconversion of L-alanine and D-alanine. May also act on other amino acids. In Leptothrix cholodnii (strain ATCC 51168 / LMG 8142 / SP-6) (Leptothrix discophora (strain SP-6)), this protein is Alanine racemase (alr).